The sequence spans 339 residues: NADH-quinone oxidoreductase subunit H (339 aa).

The next 9 helical transmembrane spans lie at 9-29 (IFPL…LILC), 50-70 (PNVV…KLLF), 82-102 (ILFV…WAVI), 115-135 (VGVL…IIAG), 161-181 (MGLV…SQIV), 187-207 (MPWW…ISVL), 235-255 (MGFA…SAMT), 275-295 (IPGF…FLWI), and 311-331 (GWKV…SVLI).

It belongs to the complex I subunit 1 family. As to quaternary structure, NDH-1 is composed of 14 different subunits. Subunits NuoA, H, J, K, L, M, N constitute the membrane sector of the complex.

The protein resides in the cell inner membrane. It carries out the reaction a quinone + NADH + 5 H(+)(in) = a quinol + NAD(+) + 4 H(+)(out). In terms of biological role, NDH-1 shuttles electrons from NADH, via FMN and iron-sulfur (Fe-S) centers, to quinones in the respiratory chain. The immediate electron acceptor for the enzyme in this species is believed to be ubiquinone. Couples the redox reaction to proton translocation (for every two electrons transferred, four hydrogen ions are translocated across the cytoplasmic membrane), and thus conserves the redox energy in a proton gradient. This subunit may bind ubiquinone. This is NADH-quinone oxidoreductase subunit H from Rickettsia bellii (strain RML369-C).